The following is an 837-amino-acid chain: Toll-like receptor 4 (837 aa).

The N-terminal stretch at 1 to 23 is a signal peptide; that stretch reads MMSASRLAGTLIPAMAFLSCVRP. Residues 24–629 are Extracellular-facing; the sequence is ESWEPCVVPN…SLNITCQMNK (606 aa). Cys-29 and Cys-38 are oxidised to a cystine. Asn-33 carries an N-linked (GlcNAc...) asparagine glycan. LRR repeat units follow at residues 53–74, 77–98, 101–122, 125–146, and 149–170; these read STKNLDLSFNPLRHLGSYSFFS, ELQVLDLSRCEIQTIEDGAYQS, HLSTLILTGNPIQSLALGAFSG, SLQKLVAVETNLASLENFPIGH, and TLKELNVAHNLIQSFKLPEYFS. N-linked (GlcNAc...) asparagine glycosylation is present at Asn-171. LRR repeat units lie at residues 174-197, 203-223, and 225-245; these read NLEYLDLSSNKIQSIYCTDLRVLH, NLSLDLSLNPMTFIQPGAFKE, and RLHKLTLRNNFDSLNVMKTCI. The N-linked (GlcNAc...) asparagine glycan is linked to Asn-203. Cysteines 279 and 304 form a disulfide. N-linked (GlcNAc...) asparagine glycosylation is found at Asn-280 and Asn-307. 10 LRR repeats span residues 329-349, 350-371, 372-392, 398-420, 421-442, 446-454, 470-493, 495-516, 519-540, and 543-563; these read GWQHLELVNCKFGQFPTLKLK, SLKRLTFTSNKGGNAFSEVDLP, SLEFLDLSRNGLSFKGCCSQS, SLKYLDLSFNGVITMSSNFLGLE, QLEHLDFQHSNLKQMSEFSVFL, NLIYLDISH, SLEVLKMAGNSFQENFLPDIFTEL, NLTFLDLSQCQLEQLSPTAFNS, SLQVLNMSHNNFFSLDTFPYKC, and SLRVLDYSLNHIMTSKKQELQ. The cysteines at positions 388 and 389 are disulfide-linked. 2 N-linked (GlcNAc...) asparagine glycosylation sites follow: Asn-495 and Asn-524. Asn-573 carries N-linked (GlcNAc...) asparagine glycosylation. The region spanning 577-627 is the LRRCT domain; the sequence is NDFACTCEHQSFLQWIKDQRQLLVEVERMECATPSDKQGMPVLSLNITCQM. 2 disulfides stabilise this stretch: Cys-581–Cys-607 and Cys-583–Cys-625. 2 N-linked (GlcNAc...) asparagine glycosylation sites follow: Asn-622 and Asn-628. A helical membrane pass occupies residues 630–650; it reads TIIGVSVLSVLVVSVVAVLVY. The Cytoplasmic segment spans residues 651–837; the sequence is KFYFHLMLLA…GCNWQEATSI (187 aa). A TIR domain is found at 670–813; it reads NVYDAFVIYS…IFWRRLRKAL (144 aa).

The protein belongs to the Toll-like receptor family. Belongs to the lipopolysaccharide (LPS) receptor, a multi-protein complex containing at least CD14, LY96 and TLR4. Binding to bacterial LPS leads to homodimerization. Interacts with LY96 via the extracellular domain. Interacts with MYD88 and TIRAP via their respective TIR domains. Interacts with TICAM2. Interacts with NOX4. Interacts with CNPY3 and HSP90B1; this interaction is required for proper folding in the endoplasmic reticulum. Interacts with MAP3K21; this interaction leads to negative regulation of TLR4 signaling. Interacts with CD36, following CD36 stimulation by oxLDL or amyloid-beta 42, and forms a heterodimer with TLR6. The trimeric complex is internalized and triggers inflammatory response. LYN kinase activity facilitates TLR4-TLR6 heterodimerization and signal initiation. Interacts with TICAM1 in response to LPS in a WDFY1-dependent manner. Interacts with WDFY1 in response to LPS. Interacts with SMPDL3B. Interacts with CEACAM1; upon lipopolysaccharide stimulation, forms a complex including TLR4 and the phosphorylated form of SYK and CEACAM1, which in turn, recruits PTPN6 that dephosphorylates SYK, reducing the production of reactive oxygen species (ROS) and lysosome disruption, which in turn, reduces the activity of the inflammasome. Interacts with RFTN1; the interaction occurs in response to lipopolysaccharide stimulation. Interacts with SCIMP; the interaction occurs in response to lipopolysaccharide stimulation and is enhanced by phosphorylation of SCIMP by LYN. This interaction facilitates the phosphorylation of TLR4 by LYN which elicits a selective cytokine response in macrophages. Interacts with TRAF3IP3. Interacts with TREM1; this interaction enhances TLR4-mediated inflammatory response. Interacts with ZG16B/PAUF. Interacts with CD82; this interaction inhibits TLR4-mediated signaling pathway. Phosphorylated on tyrosine residues by LYN after binding lipopolysaccharide. In terms of processing, ubiquitinated by RNF128 via 'Lys-28'-linked polyubiquitin chains, leading to proteasomal degradation.

Its subcellular location is the cell membrane. It localises to the early endosome. It is found in the cell projection. The protein localises to the ruffle. In terms of biological role, transmembrane receptor that functions as a pattern recognition receptor recognizing pathogen- and damage-associated molecular patterns (PAMPs and DAMPs) to induce innate immune responses via downstream signaling pathways. At the plasma membrane, cooperates with LY96 to mediate the innate immune response to bacterial lipopolysaccharide (LPS). Also involved in LPS-independent inflammatory responses triggered by free fatty acids, such as palmitate, and Ni(2+). Mechanistically, acts via MYD88, TIRAP and TRAF6, leading to NF-kappa-B activation, cytokine secretion and the inflammatory response. Alternatively, CD14-mediated TLR4 internalization via endocytosis is associated with the initiation of a MYD88-independent signaling via the TICAM1-TBK1-IRF3 axis leading to type I interferon production. In addition to the secretion of proinflammatory cytokines, initiates the activation of NLRP3 inflammasome and formation of a positive feedback loop between autophagy and NF-kappa-B signaling cascade. In complex with TLR6, promotes inflammation in monocytes/macrophages by associating with TLR6 and the receptor CD86. Upon ligand binding, such as oxLDL or amyloid-beta 42, the TLR4:TLR6 complex is internalized and triggers inflammatory response, leading to NF-kappa-B-dependent production of CXCL1, CXCL2 and CCL9 cytokines, via MYD88 signaling pathway, and CCL5 cytokine, via TICAM1 signaling pathway. In myeloid dendritic cells, vesicular stomatitis virus glycoprotein G but not LPS promotes the activation of IRF7, leading to type I IFN production in a CD14-dependent manner. This is Toll-like receptor 4 (TLR4) from Gorilla gorilla gorilla (Western lowland gorilla).